Consider the following 612-residue polypeptide: Probable serine/threonine-protein kinase WNK4 (612 aa).

Residues 25–282 (IRYNEVLGRG…AKELLQDPFL (258 aa)) enclose the Protein kinase domain. ATP-binding positions include 105–108 (TELF) and Lys155. Asp172 (proton acceptor) is an active-site residue.

This sequence belongs to the protein kinase superfamily. Ser/Thr protein kinase family. WNK subfamily.

The catalysed reaction is L-seryl-[protein] + ATP = O-phospho-L-seryl-[protein] + ADP + H(+). It carries out the reaction L-threonyl-[protein] + ATP = O-phospho-L-threonyl-[protein] + ADP + H(+). The sequence is that of Probable serine/threonine-protein kinase WNK4 (WNK4) from Oryza sativa subsp. japonica (Rice).